The following is a 311-amino-acid chain: Apulose-4-phosphate transketolase subunit B (311 aa).

This sequence belongs to the transketolase family. In terms of assembly, probable heterodimer composed of AptA and AptB. Requires thiamine diphosphate as cofactor.

It carries out the reaction apulose 4-phosphate + D-glyceraldehyde 3-phosphate = D-xylulose 5-phosphate + dihydroxyacetone phosphate. The protein operates within carbohydrate metabolism. Its function is as follows. Involved in catabolism of D-apiose. Catalyzes the transfer of the glycolaldehyde group from apulose-4-phosphate to D-glyceraldehyde 3-phosphate, generating dihydroxyacetone phosphate and D-xylulose-5-phosphate. In Actinobacillus succinogenes (strain ATCC 55618 / DSM 22257 / CCUG 43843 / 130Z), this protein is Apulose-4-phosphate transketolase subunit B.